We begin with the raw amino-acid sequence, 522 residues long: MIRLHRPQRPPLRAPLRATPSLSLRWRVMLLAMSMVAMVVVLMAFAVYAVISAALYSDIDNQLQSRAQLLIASGSLAADPGKAIEGTAYSDVNAMLVNPGHAIYTAQQPGQTLPVGSPEKAVIHGELFMSRRTAGDQRILAVHLQNGTSLLISKSLKPTEAVMNKLRWVLLIVGGVGVAVAAVAGGMVTRAGLRPVARLTEAAERVARTDDLRPIPVFGSDELARLTESFNLMLRALAESRERQARLVTDAGHELRTPLTSLRTNVELLMASMEPGAPRLPEQEMVELRADVLAQIEELSTLVGDLVDLTRDDAGQVVHEPVDMSDVIDRSLERVRRRRNDIHFDVDVTPWQMYGDAAGLSRAVLNLLDNAAKWSPPGGHVGVTMRQLDPSHAELVVSDHGPGIPPQERRLVFERFYRSTSARAMPGSGLGLAIVKKVVLNHGGMLRVEDTVPGGQPPGTSFYVLLPGRPLPPAGHSTPAGESETDKAEAATDPAVPVAGDTANSRESANVISVDSQSARAR.

Residues 1 to 30 are Cytoplasmic-facing; sequence MIRLHRPQRPPLRAPLRATPSLSLRWRVML. Residues 31–51 form a helical membrane-spanning segment; that stretch reads LAMSMVAMVVVLMAFAVYAVI. Over 52–167 the chain is Extracellular; it reads SAALYSDIDN…PTEAVMNKLR (116 aa). Residues 168 to 188 traverse the membrane as a helical segment; that stretch reads WVLLIVGGVGVAVAAVAGGMV. Over 189-522 the chain is Cytoplasmic; that stretch reads TRAGLRPVAR…SVDSQSARAR (334 aa). Residues 190–242 enclose the HAMP domain; the sequence is RAGLRPVARLTEAAERVARTDDLRPIPVFGSDELARLTESFNLMLRALAESRE. Residues 250-470 form the Histidine kinase domain; sequence DAGHELRTPL…SFYVLLPGRP (221 aa). At histidine 253 the chain carries Phosphohistidine; by autocatalysis. The disordered stretch occupies residues 468–522; sequence GRPLPPAGHSTPAGESETDKAEAATDPAVPVAGDTANSRESANVISVDSQSARAR. Polar residues predominate over residues 502-522; the sequence is TANSRESANVISVDSQSARAR.

It depends on Mg(2+) as a cofactor. Mn(2+) is required as a cofactor. In terms of processing, autophosphorylated.

The protein localises to the cell membrane. The catalysed reaction is ATP + protein L-histidine = ADP + protein N-phospho-L-histidine.. In terms of biological role, member of the two-component regulatory system MprB/MprA which contributes to maintaining a balance among several systems involved in stress resistance and is required for establishment and maintenance of persistent infection in the host. In response to environmental signals MprB acts both as a membrane-associated protein kinase that undergoes autophosphorylation and subsequently transfers the phosphate to MprA, and a protein phosphatase that dephosphorylates phospho-MprA. This is Signal transduction histidine-protein kinase/phosphatase MprB (mprB) from Mycobacterium avium (strain 104).